A 62-amino-acid polypeptide reads, in one-letter code: uncharacterized protein (62 aa).

This is an uncharacterized protein from Sulfolobus islandicus filamentous virus (isolate Iceland/Hveragerdi) (SIFV).